Here is a 1064-residue protein sequence, read N- to C-terminus: Lysine-specific demethylase 4A (1064 aa).

Ala-2 carries the post-translational modification N-acetylalanine. Residues 14–56 form the JmjN domain; the sequence is IMTFYPTMEEFRNFSRYIAYIESQGAHRAGLAKVVPPKEWKPR. Residue Tyr-132 participates in 2-oxoglutarate binding. Positions 142-308 constitute a JmjC domain; sequence EKHVDEWNIG…YGKQAVLCSC (167 aa). Fe cation-binding residues include His-188 and Glu-190. Residues Asn-198 and Lys-206 each coordinate 2-oxoglutarate. 2 residues coordinate Zn(2+): Cys-234 and His-240. Residue Lys-241 coordinates 2-oxoglutarate. His-276 is a binding site for Fe cation. 2 residues coordinate Zn(2+): Cys-306 and Cys-308. Disordered stretches follow at residues 358–384, 501–537, and 616–642; these read ELPP…EEGD, FSGS…RAQG, and SDDE…PLSQ. The segment covering 366–382 has biased composition (acidic residues); the sequence is EEECPEDDMEGVEDGEE. Residues 509 to 532 show a composition bias toward low complexity; that stretch reads SSSLGSGSSRDSVSSDSETSEPLS. Ser-523 is modified (phosphoserine). The interval 597–638 is interaction with NCOR1; the sequence is RQPLSKLPRHHPLVLQECVSDDETSEQLTPEEEAEETEAWAK. The segment covering 616–634 has biased composition (acidic residues); it reads SDDETSEQLTPEEEAEETE. The PHD-type 1 zinc-finger motif lies at 709 to 767; the sequence is MCFTSTGCGTDINLSTPYLEEDGTSILVSCKKCSVRVHASCYGVPPAKASEDWMCSRCS. Residues 772 to 805 form a C2HC pre-PHD-type zinc finger; that stretch reads EEDCCLCSLRGGALQRANDDRWVHVSCAVAILEA. Residues 828–885 form a PHD-type 2 zinc finger; sequence LKCIFCKKRRKRTAGCCVQCSHGRCPTAFHVSCAQAAGVMMQPDDWPFVVFITCFRHK. Tudor domains follow at residues 897 to 954 and 955 to 1011; these read QSIT…CLQF and GPPA…EELP.

The protein belongs to the JHDM3 histone demethylase family. Interacts with histone deacetylase proteins HDAC1, HDAC2 and HDAC3. Interacts with RB and NCOR1. Interacts with VRK1. Requires Fe(2+) as cofactor. Ubiquitinated by RNF8 and RNF168, leading to its degradation. Degradation promotes accessibility of H4K20me2 mark for DNA repair protein TP53BP1, which is then recruited. Also ubiquitinated by the SCF(FBXO22) complex; leading to proteasomal degradation.

It is found in the nucleus. It carries out the reaction N(6),N(6),N(6)-trimethyl-L-lysyl(9)-[histone H3] + 2 2-oxoglutarate + 2 O2 = N(6)-methyl-L-lysyl(9)-[histone H3] + 2 formaldehyde + 2 succinate + 2 CO2. It catalyses the reaction N(6),N(6),N(6)-trimethyl-L-lysyl(36)-[histone H3] + 2 2-oxoglutarate + 2 O2 = N(6)-methyl-L-lysyl(36)-[histone H3] + 2 formaldehyde + 2 succinate + 2 CO2. In terms of biological role, histone demethylase that specifically demethylates 'Lys-9' and 'Lys-36' residues of histone H3, thereby playing a central role in histone code. Does not demethylate histone H3 'Lys-4', H3 'Lys-27' nor H4 'Lys-20'. Demethylates trimethylated H3 'Lys-9' and H3 'Lys-36' residue, while it has no activity on mono- and dimethylated residues. Demethylation of Lys residue generates formaldehyde and succinate. Participates in transcriptional repression of ASCL2 and E2F-responsive promoters via the recruitment of histone deacetylases and NCOR1, respectively. This is Lysine-specific demethylase 4A (KDM4A) from Pongo abelii (Sumatran orangutan).